Consider the following 167-residue polypeptide: Translationally-controlled tumor protein homolog (167 aa).

The 167-residue stretch at 1-167 (MIIYKDIFSG…WKHGIDEEKI (167 aa)) folds into the TCTP domain.

The protein belongs to the TCTP family.

It localises to the cytoplasm. Its subcellular location is the cytoskeleton. In terms of biological role, involved in protein synthesis. Involved in microtubule stabilization. The chain is Translationally-controlled tumor protein homolog from Candida glabrata (strain ATCC 2001 / BCRC 20586 / JCM 3761 / NBRC 0622 / NRRL Y-65 / CBS 138) (Yeast).